Consider the following 372-residue polypeptide: Ligninase C (372 aa).

The first 26 residues, 1–26 (MAFKSLLSFVSVIGALQGANAALTRR), serve as a signal peptide directing secretion. Residue H74 is the Proton acceptor of the active site. Ca(2+) is bound by residues D75, G93, D95, and S97. An N-linked (GlcNAc...) asparagine glycan is attached at N129. A heme b-binding site is contributed by H205. Ca(2+) contacts are provided by T206, D223, T225, L228, and D230. The tract at residues 346-372 (TPFPTFPTDPGPKTAVAPVPKPPAARK) is disordered.

This sequence belongs to the peroxidase family. Ligninase subfamily. Ca(2+) serves as cofactor. Heme b is required as a cofactor.

It carries out the reaction 1-(3,4-dimethoxyphenyl)-2-(2-methoxyphenoxy)propane-1,3-diol + H2O2 = 3,4-dimethoxybenzaldehyde + guaiacol + glycolaldehyde + H2O. It catalyses the reaction 2 (3,4-dimethoxyphenyl)methanol + H2O2 = 2 (3,4-dimethoxyphenyl)methanol radical + 2 H2O. It participates in secondary metabolite metabolism; lignin degradation. Its function is as follows. Depolymerization of lignin. Catalyzes the C(alpha)-C(beta) cleavage of the propyl side chains of lignin. This Trametes versicolor (White-rot fungus) protein is Ligninase C.